A 439-amino-acid polypeptide reads, in one-letter code: 26S rRNA (cytosine-C(5))-methyltransferase nsun-5 (439 aa).

S-adenosyl-L-methionine is bound by residues Asp266, Asp293, and Asp313. Cys366 functions as the Nucleophile in the catalytic mechanism.

This sequence belongs to the class I-like SAM-binding methyltransferase superfamily. RsmB/NOP family.

It catalyses the reaction a cytidine in 26S rRNA + S-adenosyl-L-methionine = a 5-methylcytidine in 26S rRNA + S-adenosyl-L-homocysteine + H(+). Functionally, S-adenosyl-L-methionine-dependent methyltransferase which methylates the carbon-5 position of cytosine 2381 to 5-methylcytosine (m5C2381) in 26S rRNA. Plays a role in the production of mature 5S, 5.8S, 18S and 26S rRNAs and promotes the processing of the internally transcribed spacer 2 (ITS2), which separates the 5.8S and 26S rRNAs on large pre-rRNA precursors. May play a role in the translation of leucine and proline codons. May play a role in maintaining ribosomal frameshifting in response to osmotic stress. Not required for global translation. The protein is 26S rRNA (cytosine-C(5))-methyltransferase nsun-5 of Caenorhabditis elegans.